The sequence spans 911 residues: Facilitated trehalose transporter Tret1 (911 aa).

The tract at residues 1 to 256 (MSGRDNRGAG…RIGFQQQKAT (256 aa)) is disordered. The Cytoplasmic portion of the chain corresponds to 1–446 (MSGRDNRGAG…VYRPTTNPIY (446 aa)). The segment covering 8-19 (GAGGGGGGGGGG) has biased composition (gly residues). The segment covering 32–50 (KLKEKLTRAGEELGYHRVE) has biased composition (basic and acidic residues). Composition is skewed to low complexity over residues 51–64 (SNLS…SLDT), 76–129 (AAPQ…QQLR), and 156–166 (QQIHVQQQQQQ). Residues S302, S303, and S304 each carry the phosphoserine modification. Residues 334–355 (VLQGSSTDSDEEGDDAEHKRLI) form a disordered region. Residues S374 and S376 each carry the phosphoserine modification. Residues 380–402 (FLTSRQNFQQQRSISTDSRKSRR) form a disordered region. Positions 384-395 (RQNFQQQRSIST) are enriched in polar residues. Residues 447–467 (IWTQVLAALSVSLGSLVVGFA) traverse the membrane as a helical segment. Residues 468-494 (SAYTSPALVSMTNTNLTSFVVTPQAAS) lie on the Extracellular side of the membrane. N482 carries an N-linked (GlcNAc...) asparagine glycan. A helical membrane pass occupies residues 495-515 (WVGGIMPLAGLAGGIAGGPFI). Residues 516–527 (EYLGRRNTILAT) are Cytoplasmic-facing. Residues 528 to 548 (AVPFIVSWLLIACAVNVIMVL) traverse the membrane as a helical segment. Residues 549 to 551 (CGR) are Extracellular-facing. A helical membrane pass occupies residues 552-572 (FLAGFCVGIASLSLPVYLGET). Topologically, residues 573–578 (VQPEVR) are cytoplasmic. Residues 579 to 599 (GTLGLLPTAFGNIGILLCFVA) traverse the membrane as a helical segment. At 600-606 (GTYMDWS) the chain is on the extracellular side. Residues 607-627 (MLAFLGASLPVPFLILMFLIP) traverse the membrane as a helical segment. Residues 628–690 (ETPRWYVSRG…ELLKRSNLKP (63 aa)) lie on the Cytoplasmic side of the membrane. The helical transmembrane segment at 691 to 711 (LSISLGLMFFQQLSGINAVIF) threads the bilayer. Residues 712 to 727 (YTVQIFQDAGSTIDGN) lie on the Extracellular side of the membrane. A helical transmembrane segment spans residues 728–748 (VCTIIVGVVNFAATFIATILI). Over 749–754 (DRAGRK) the chain is Cytoplasmic. A helical transmembrane segment spans residues 755–775 (VLLYVSNVMMVLTLFVLGGFF). At 776 to 794 (YCKSSGMDTSNVGWLPLSC) the chain is on the extracellular side. Residues 795–815 (FVIYILGFSLGFGPIPWLMMG) traverse the membrane as a helical segment. The Cytoplasmic portion of the chain corresponds to 816–821 (EILPAK). The chain crosses the membrane as a helical span at residues 822-842 (IRGSAASVATAFNWSCTFVVT). Over 843–855 (KSFQDMIDFMGAH) the chain is Extracellular. Residues 856 to 876 (GAFWMFGAICFIGLFFVIFYV) form a helical membrane-spanning segment. Topologically, residues 877-911 (PETQGKTLEDIERKMMGRVRRMSSVANIKPLSFNM) are cytoplasmic. 2 positions are modified to phosphoserine: S899 and S900.

Belongs to the major facilitator superfamily. Sugar transporter (TC 2.A.1.1) family. Trehalose transporter subfamily.

The protein resides in the cell membrane. In terms of biological role, low-capacity facilitative transporter for trehalose. Does not transport maltose, sucrose or lactose. Mediates the bidirectional transfer of trehalose. Responsible for the transport of trehalose synthesized in the fat body and the incorporation of trehalose into other tissues that require a carbon source, thereby regulating trehalose levels in the hemolymph. The polypeptide is Facilitated trehalose transporter Tret1 (Drosophila virilis (Fruit fly)).